A 290-amino-acid polypeptide reads, in one-letter code: MNRPTAQGAVNLSGSKFSTAKSWEPEQERLTWQPGTVSMNTVTSPGPMANSVYVVAPPNSYPVVPGTVPQMPIYPSNQPQVHVISGHLPGLVPAMTEPPAQRVLKKGQVLGAIQILIGLVHIGLGSIMITNLFSHYTPVSLYGGFPFWGGIWFIISGSLSVAAETQPNSPCLLNGSVGLNIFSAICSAVGIMLFITDISISSGYIYPSYYPYQENLGVRTGVAISSVLLIFCLLELSIASVSSHFGCQVACCHYNNPGVVIPNVYAANPVVIPEPPNPIPSYSEVVQDSR.

Over residues 1–21 (MNRPTAQGAVNLSGSKFSTAK) the composition is skewed to polar residues. The interval 1–25 (MNRPTAQGAVNLSGSKFSTAKSWEP) is disordered. Over 1–108 (MNRPTAQGAV…PAQRVLKKGQ (108 aa)) the chain is Cytoplasmic. Residues 109 to 129 (VLGAIQILIGLVHIGLGSIMI) traverse the membrane as a helical segment. At 130-138 (TNLFSHYTP) the chain is on the extracellular side. The helical transmembrane segment at 139-159 (VSLYGGFPFWGGIWFIISGSL) threads the bilayer. Residues 160 to 174 (SVAAETQPNSPCLLN) lie on the Cytoplasmic side of the membrane. Residues 175 to 195 (GSVGLNIFSAICSAVGIMLFI) form a helical membrane-spanning segment. The Extracellular segment spans residues 196–220 (TDISISSGYIYPSYYPYQENLGVRT). Residues 221-241 (GVAISSVLLIFCLLELSIASV) traverse the membrane as a helical segment. Residues 242–290 (SSHFGCQVACCHYNNPGVVIPNVYAANPVVIPEPPNPIPSYSEVVQDSR) lie on the Cytoplasmic side of the membrane.

Belongs to the MS4A family. Expressed strongly in intestine and colon and minimally in lung and ovary.

The protein localises to the membrane. In terms of biological role, may be involved in signal transduction as a component of a multimeric receptor complex. The polypeptide is Membrane-spanning 4-domains subfamily A member 8 (Ms4a8) (Mus musculus (Mouse)).